Reading from the N-terminus, the 156-residue chain is Transcription antitermination protein NusB (156 aa).

Belongs to the NusB family.

Functionally, involved in transcription antitermination. Required for transcription of ribosomal RNA (rRNA) genes. Binds specifically to the boxA antiterminator sequence of the ribosomal RNA (rrn) operons. The chain is Transcription antitermination protein NusB from Clostridium kluyveri (strain ATCC 8527 / DSM 555 / NBRC 12016 / NCIMB 10680 / K1).